Here is an 807-residue protein sequence, read N- to C-terminus: Lysyl oxidase homolog 3B (807 aa).

The first 24 residues, M1–A24, serve as a signal peptide directing secretion. 5 SRCR domains span residues F49 to K150, V175 to V288, T309 to N409, V419 to A470, and V476 to S579. 9 cysteine pairs are disulfide-bonded: C75–C139, C88–C149, C119–C129, C207–C277, C220–C287, C254–C264, C334–C398, C347–C408, and C378–C388. N272 is a glycosylation site (N-linked (GlcNAc...) asparagine). N-linked (GlcNAc...) asparagine glycosylation occurs at N392. 2 disulfides stabilise this stretch: C514–C578 and C547–C557. An N-linked (GlcNAc...) asparagine glycan is attached at N536. A glycan (N-linked (GlcNAc...) asparagine) is linked at N679. The lysine tyrosylquinone (Lys-Tyr) cross-link spans K688–Y724. At Y724 the chain carries 2',4',5'-topaquinone.

It belongs to the lysyl oxidase family. Requires Cu cation as cofactor. The cofactor is lysine tyrosylquinone residue. In terms of processing, the lysine tyrosylquinone cross-link (LTQ) is generated by condensation of the epsilon-amino group of a lysine with a topaquinone produced by oxidation of tyrosine.

It localises to the secreted. The protein resides in the extracellular space. Its subcellular location is the cytoplasm. The protein localises to the nucleus. It carries out the reaction L-lysyl-[protein] + O2 + H2O = (S)-2-amino-6-oxohexanoyl-[protein] + H2O2 + NH4(+). It catalyses the reaction N(6)-acetyl-L-lysyl-[protein] + O2 + H2O = acetamide + (S)-2-amino-6-oxohexanoyl-[protein] + H2O2. Functionally, protein-lysine 6-oxidase that mediates the oxidation of peptidyl lysine residues to allysine in target proteins. Catalyzes the post-translational oxidative deamination of peptidyl lysine residues in precursors of elastin and different types of collagens, a prerequisite in the formation of cross-links between collagens and elastin. Can mediate oxidation of lysine residues that are acetylated. Also able to catalyze deacetylation of lysine residues. Required for maturation of neural crest derived cartilage elements. The polypeptide is Lysyl oxidase homolog 3B (Danio rerio (Zebrafish)).